The following is a 342-amino-acid chain: Anthranilate phosphoribosyltransferase (342 aa).

5-phospho-alpha-D-ribose 1-diphosphate is bound by residues glycine 84, 87 to 88, threonine 92, 94 to 97, 112 to 120, and serine 124; these read GD, NIST, and KHGNRGVSS. Glycine 84 contacts anthranilate. Mg(2+) is bound at residue serine 96. Residue asparagine 115 participates in anthranilate binding. Arginine 170 provides a ligand contact to anthranilate. The Mg(2+) site is built by aspartate 229 and glutamate 230.

Belongs to the anthranilate phosphoribosyltransferase family. In terms of assembly, homodimer. Mg(2+) is required as a cofactor.

The catalysed reaction is N-(5-phospho-beta-D-ribosyl)anthranilate + diphosphate = 5-phospho-alpha-D-ribose 1-diphosphate + anthranilate. It participates in amino-acid biosynthesis; L-tryptophan biosynthesis; L-tryptophan from chorismate: step 2/5. Functionally, catalyzes the transfer of the phosphoribosyl group of 5-phosphorylribose-1-pyrophosphate (PRPP) to anthranilate to yield N-(5'-phosphoribosyl)-anthranilate (PRA). This Cupriavidus metallidurans (strain ATCC 43123 / DSM 2839 / NBRC 102507 / CH34) (Ralstonia metallidurans) protein is Anthranilate phosphoribosyltransferase.